We begin with the raw amino-acid sequence, 85 residues long: Delta/kappa-theraphotoxin-Pm1a (85 aa).

Residues 1–19 (MKTFVFIVLVALAFVLTAA) form the signal peptide. A propeptide spanning residues 20 to 43 (KEERANPSELVSALAELVMLDAER) is cleaved from the precursor. 3 disulfide bridges follow: Cys50/Cys64, Cys57/Cys69, and Cys63/Cys77.

The protein belongs to the neurotoxin 10 (Hwtx-1) family. As to expression, expressed by the venom gland.

Its subcellular location is the secreted. Multimodal toxin that enhances nociceptor excitability mainly by the simultaneous stimulation of repetitive firing (through Nav1.8/SCN10A channel current enhancement) and impairment of repolarization (by inhibiting delayed rectifier current of Kv2.1/KCNB1), with a potential contribution from tetrodotoxin-sensitive voltage-gated sodium channels (Nav) modified excitability. Enhances Nav1.8/SCN10A currents (EC(50)=1.1 uM), modifies the channel gating by a right-shift in steady-state inactivation and delays open-state inactivation. Also decreases Kv2.1/KCNB1 currents (IC(50)=0.43 uM) and causes a depolarizing shift in the voltage dependence of activation without change in steady-state inactivation. In addition, inhibits peak currents of human sodium channels (Nav1.1 to Nav1.7, IC(50)=0.38-2.3 uM) and delays fast inactivation of Nav1.1/SCN1A, Nav1.3/SCN3A, Nav1.6/SCN8A, and Nav1.7/SCN9A. In small dorsal root ganglion neurons, induces hyperexcitability by enhancing tetrodotoxin-resistant sodium currents, impairing repolarization and lowering the threshold of action potential firing, consistent with the severe pain associated with envenomation. In vivo, elicits nocifensive behavior in mice after intraplantar injection. The protein is Delta/kappa-theraphotoxin-Pm1a of Pelinobius muticus (King baboon spider).